A 277-amino-acid polypeptide reads, in one-letter code: Collectin-10 (277 aa).

The signal sequence occupies residues 1–27 (MNGFASLLRRNQFILLVLFLLQIQSLG). The disordered stretch occupies residues 40 to 107 (ATHTISPGPK…GDKGEKGLLG (68 aa)). A compositionally biased stretch (basic and acidic residues) spans 49–64 (KGDDGEKGDPGEEGKH). The 60-residue stretch at 53–112 (GEKGDPGEEGKHGKVGRMGPKGIKGELGDMGDQGNIGKTGPIGKKGDKGEKGLLGIPGEK) folds into the Collagen-like domain. Residues 155-271 (TEEKFYYIVQ…CHLTMYFVCE (117 aa)) form the C-type lectin domain. 2 cysteine pairs are disulfide-bonded: Cys176/Cys270 and Cys248/Cys262. An N-linked (GlcNAc...) asparagine glycan is attached at Asn258.

This sequence belongs to the COLEC10/COLEC11 family. Highly expressed in liver, placenta and adrenal gland. Moderately expressed in small intestine, lung, stomach and prostate. Weakly expressed in trachea and spleen.

The protein resides in the secreted. It localises to the golgi apparatus. The protein localises to the cytoplasm. In terms of biological role, lectin that binds to various sugars: galactose &gt; mannose = fucose &gt; N-acetylglucosamine &gt; N-acetylgalactosamine. Acts as a chemoattractant, probably involved in the regulation of cell migration. This is Collectin-10 (COLEC10) from Homo sapiens (Human).